We begin with the raw amino-acid sequence, 154 residues long: PTS system glucose-specific EIIA component (154 aa).

The PTS EIIA type-1 domain maps to 26–130 (DEVFKERMLG…SIKSPIIFTN (105 aa)). Zn(2+) contacts are provided by His63 and His78. His78 acts as the Tele-phosphohistidine intermediate; for EIIA activity in catalysis. The residue at position 78 (His78) is a Phosphohistidine; by HPr.

As to quaternary structure, heterodimer with glycerol kinase (glpk). Zn(2+) is required as a cofactor.

Its subcellular location is the cytoplasm. Functionally, the phosphoenolpyruvate-dependent sugar phosphotransferase system (sugar PTS), a major carbohydrate active transport system, catalyzes the phosphorylation of incoming sugar substrates concomitantly with their translocation across the cell membrane. The enzyme II complex composed of PtsG and Crr is involved in glucose transport. The polypeptide is PTS system glucose-specific EIIA component (crr) (Mycoplasma capricolum subsp. capricolum (strain California kid / ATCC 27343 / NCTC 10154)).